The chain runs to 426 residues: 3-phosphoshikimate 1-carboxyvinyltransferase (426 aa).

Residues Lys-21, Ser-22, and Arg-26 each contribute to the 3-phosphoshikimate site. Residue Lys-21 participates in phosphoenolpyruvate binding. Gly-93 and Arg-121 together coordinate phosphoenolpyruvate. Positions 165, 167, 313, and 340 each coordinate 3-phosphoshikimate. Phosphoenolpyruvate is bound at residue Gln-167. Catalysis depends on Asp-313, which acts as the Proton acceptor. Phosphoenolpyruvate is bound by residues Arg-344 and Arg-386.

Belongs to the EPSP synthase family. Monomer.

It localises to the cytoplasm. The enzyme catalyses 3-phosphoshikimate + phosphoenolpyruvate = 5-O-(1-carboxyvinyl)-3-phosphoshikimate + phosphate. Its pathway is metabolic intermediate biosynthesis; chorismate biosynthesis; chorismate from D-erythrose 4-phosphate and phosphoenolpyruvate: step 6/7. Its function is as follows. Catalyzes the transfer of the enolpyruvyl moiety of phosphoenolpyruvate (PEP) to the 5-hydroxyl of shikimate-3-phosphate (S3P) to produce enolpyruvyl shikimate-3-phosphate and inorganic phosphate. The chain is 3-phosphoshikimate 1-carboxyvinyltransferase from Solibacter usitatus (strain Ellin6076).